We begin with the raw amino-acid sequence, 276 residues long: Large ribosomal subunit protein uL2c (276 aa).

Positions 223–254 are disordered; the sequence is VVKNPIDHPHGGGEGRSPIGRAKPVTPWGQPA.

The protein belongs to the universal ribosomal protein uL2 family. Part of the 50S ribosomal subunit.

The protein localises to the plastid. It localises to the chloroplast. This chain is Large ribosomal subunit protein uL2c (rpl2), found in Emiliania huxleyi (Coccolithophore).